Reading from the N-terminus, the 315-residue chain is Methionyl-tRNA formyltransferase (315 aa).

115 to 118 (SLLP) contacts (6S)-5,6,7,8-tetrahydrofolate.

Belongs to the Fmt family.

It catalyses the reaction L-methionyl-tRNA(fMet) + (6R)-10-formyltetrahydrofolate = N-formyl-L-methionyl-tRNA(fMet) + (6S)-5,6,7,8-tetrahydrofolate + H(+). In terms of biological role, attaches a formyl group to the free amino group of methionyl-tRNA(fMet). The formyl group appears to play a dual role in the initiator identity of N-formylmethionyl-tRNA by promoting its recognition by IF2 and preventing the misappropriation of this tRNA by the elongation apparatus. This Dehalococcoides mccartyi (strain ATCC BAA-2100 / JCM 16839 / KCTC 5957 / BAV1) protein is Methionyl-tRNA formyltransferase.